The chain runs to 229 residues: Uracil-DNA glycosylase (229 aa).

The Proton acceptor role is filled by aspartate 64.

The protein belongs to the uracil-DNA glycosylase (UDG) superfamily. UNG family.

The protein localises to the cytoplasm. The catalysed reaction is Hydrolyzes single-stranded DNA or mismatched double-stranded DNA and polynucleotides, releasing free uracil.. Excises uracil residues from the DNA which can arise as a result of misincorporation of dUMP residues by DNA polymerase or due to deamination of cytosine. This chain is Uracil-DNA glycosylase, found in Escherichia coli O81 (strain ED1a).